We begin with the raw amino-acid sequence, 87 residues long: Small ribosomal subunit protein bS16 (87 aa).

The protein belongs to the bacterial ribosomal protein bS16 family.

This Onion yellows phytoplasma (strain OY-M) protein is Small ribosomal subunit protein bS16.